The primary structure comprises 363 residues: Phospho-N-acetylmuramoyl-pentapeptide-transferase (363 aa).

The next 11 helical transmembrane spans lie at 27 to 47 (AGAA…PLIA), 76 to 96 (TMGG…WADL), 97 to 117 (TDGY…VGFA), 137 to 157 (LGCE…LMPA), 171 to 191 (WLLP…TGFG), 202 to 222 (GLAI…SYLV), 226 to 246 (VFAD…CVFC), 248 to 268 (ALVG…AVFM), 271 to 291 (TGSL…KHEL), 292 to 312 (VLCI…IQVF), and 340 to 360 (KIVI…LATL).

Belongs to the glycosyltransferase 4 family. MraY subfamily. It depends on Mg(2+) as a cofactor.

It localises to the cell inner membrane. The catalysed reaction is UDP-N-acetyl-alpha-D-muramoyl-L-alanyl-gamma-D-glutamyl-meso-2,6-diaminopimeloyl-D-alanyl-D-alanine + di-trans,octa-cis-undecaprenyl phosphate = di-trans,octa-cis-undecaprenyl diphospho-N-acetyl-alpha-D-muramoyl-L-alanyl-D-glutamyl-meso-2,6-diaminopimeloyl-D-alanyl-D-alanine + UMP. It participates in cell wall biogenesis; peptidoglycan biosynthesis. Functionally, catalyzes the initial step of the lipid cycle reactions in the biosynthesis of the cell wall peptidoglycan: transfers peptidoglycan precursor phospho-MurNAc-pentapeptide from UDP-MurNAc-pentapeptide onto the lipid carrier undecaprenyl phosphate, yielding undecaprenyl-pyrophosphoryl-MurNAc-pentapeptide, known as lipid I. In Gluconacetobacter diazotrophicus (strain ATCC 49037 / DSM 5601 / CCUG 37298 / CIP 103539 / LMG 7603 / PAl5), this protein is Phospho-N-acetylmuramoyl-pentapeptide-transferase.